We begin with the raw amino-acid sequence, 408 residues long: Tyrosine--tRNA ligase (408 aa).

The 'HIGH' region motif lies at 50–59 (PTGKDLTLGH). The 'KMSKS' region signature appears at 234 to 238 (KMSKS). Lys-237 serves as a coordination point for ATP. In terms of domain architecture, S4 RNA-binding spans 346–407 (MQAARVLFTA…GKRKYGRVVL (62 aa)).

Belongs to the class-I aminoacyl-tRNA synthetase family. TyrS type 2 subfamily. Homodimer.

Its subcellular location is the cytoplasm. It carries out the reaction tRNA(Tyr) + L-tyrosine + ATP = L-tyrosyl-tRNA(Tyr) + AMP + diphosphate + H(+). Functionally, catalyzes the attachment of tyrosine to tRNA(Tyr) in a two-step reaction: tyrosine is first activated by ATP to form Tyr-AMP and then transferred to the acceptor end of tRNA(Tyr). The polypeptide is Tyrosine--tRNA ligase (Symbiobacterium thermophilum (strain DSM 24528 / JCM 14929 / IAM 14863 / T)).